The primary structure comprises 490 residues: Probable G-protein coupled receptor npr-8 (490 aa).

Topologically, residues 1–55 (MEVKDIDNYCDRGISPNASNYLTYPFDGLCLQKFFYQLQTSLRRFTPYEEIIYTT) are extracellular. Asn-17 carries an N-linked (GlcNAc...) asparagine glycan. The chain crosses the membrane as a helical span at residues 56–76 (VYIIISVAAVIGNGLVIMAVV). Over 77-86 (RKKTMRTNRN) the chain is Cytoplasmic. Residues 87–107 (VLILNLALSNLILAITNIPFL) traverse the membrane as a helical segment. The Extracellular segment spans residues 108–125 (WLPSIDFEFPYSRFFCKF). A helical transmembrane segment spans residues 126-146 (ANVLPGSNIYCSTLTISVMAI). The Cytoplasmic portion of the chain corresponds to 147-166 (DRYYSVKKLKIASNRKQCFH). The chain crosses the membrane as a helical span at residues 167-187 (AVLVSLAIWIVSFILSLPLLL). Topologically, residues 188 to 236 (YYETSMLYVMREIRVVDQSGQEVIRSYGWRQCRLVSAGRLPDITQSIQL) are extracellular. Residues 237–257 (LMSILQVAFLYIVPLFVLSIF) form a helical membrane-spanning segment. Topologically, residues 258–331 (NVKLTRFLKT…QRTNRTTSLL (74 aa)) are cytoplasmic. A disordered region spans residues 272 to 322 (MSKTRAPPKRFDRSDSHHNSLKNNNNHTSSLRSPSMPSIRSSITERNKTNQ). A compositionally biased stretch (basic and acidic residues) spans 280 to 289 (KRFDRSDSHH). Residues 292 to 313 (LKNNNNHTSSLRSPSMPSIRSS) are compositionally biased toward low complexity. The helical transmembrane segment at 332 to 352 (IAMAGSYAALWFPFTLITFLI) threads the bilayer. At 353–374 (DFELIINQDYVNLVERIDQTCK) the chain is on the extracellular side. The chain crosses the membrane as a helical span at residues 375–395 (MVSMLSICVNPFLYGFLNTNF). Residues 396 to 490 (RHEFSDIYYR…DDDIEKDSFV (95 aa)) are Cytoplasmic-facing.

Belongs to the G-protein coupled receptor 1 family.

It localises to the cell membrane. Its function is as follows. Not known. Putative receptor. This chain is Probable G-protein coupled receptor npr-8, found in Caenorhabditis elegans.